The sequence spans 509 residues: Maturase K (509 aa).

This sequence belongs to the intron maturase 2 family. MatK subfamily.

The protein localises to the plastid. Its subcellular location is the chloroplast. Usually encoded in the trnK tRNA gene intron. Probably assists in splicing its own and other chloroplast group II introns. The sequence is that of Maturase K from Nicotiana rustica (Aztec tobacco).